Here is a 444-residue protein sequence, read N- to C-terminus: 23S rRNA (uracil(1939)-C(5))-methyltransferase RlmD (444 aa).

In terms of domain architecture, TRAM spans 5-67; the sequence is RSRIDRTPFQ…RHFDEARTVE (63 aa). Residues C80, C86, C89, and C168 each coordinate [4Fe-4S] cluster. Residues Q276, F305, N310, E326, D353, and D374 each coordinate S-adenosyl-L-methionine. The active-site Nucleophile is the C400.

It belongs to the class I-like SAM-binding methyltransferase superfamily. RNA M5U methyltransferase family. RlmD subfamily.

The enzyme catalyses uridine(1939) in 23S rRNA + S-adenosyl-L-methionine = 5-methyluridine(1939) in 23S rRNA + S-adenosyl-L-homocysteine + H(+). Catalyzes the formation of 5-methyl-uridine at position 1939 (m5U1939) in 23S rRNA. The protein is 23S rRNA (uracil(1939)-C(5))-methyltransferase RlmD of Stenotrophomonas maltophilia (strain K279a).